The sequence spans 744 residues: Serine/threonine-protein kinase GM11705 (744 aa).

Over residues 17-35 the composition is skewed to polar residues; it reads VLSSHQPSPSATHPQSVPS. Disordered regions lie at residues 17–38 and 54–78; these read VLSS…SKAN and NVQE…PEKE. Doublecortin domains follow at residues 154–240 and 309–392; these read LRIK…VEYN and RIVT…AEDF. The Protein kinase domain occupies 473 to 731; sequence YTLGRIIGDG…SEDILDHPWT (259 aa). ATP is bound by residues 479-487 and lysine 502; that span reads IGDGNFAIV. Aspartate 594 acts as the Proton acceptor in catalysis.

This sequence belongs to the protein kinase superfamily. CAMK Ser/Thr protein kinase family. CaMK subfamily.

The enzyme catalyses L-seryl-[protein] + ATP = O-phospho-L-seryl-[protein] + ADP + H(+). It carries out the reaction L-threonyl-[protein] + ATP = O-phospho-L-threonyl-[protein] + ADP + H(+). This is Serine/threonine-protein kinase GM11705 from Drosophila sechellia (Fruit fly).